The sequence spans 142 residues: Large ribosomal subunit protein uL13 (142 aa).

The protein belongs to the universal ribosomal protein uL13 family. As to quaternary structure, part of the 50S ribosomal subunit.

This protein is one of the early assembly proteins of the 50S ribosomal subunit, although it is not seen to bind rRNA by itself. It is important during the early stages of 50S assembly. This Delftia acidovorans (strain DSM 14801 / SPH-1) protein is Large ribosomal subunit protein uL13.